The primary structure comprises 448 residues: Probable ribonuclease FAU-1 (448 aa).

A disordered region spans residues E426–A448. Residues E436–A448 show a composition bias toward polar residues.

It belongs to the FAU-1 family.

Probable RNase involved in rRNA stability through maturation and/or degradation of precursor rRNAs. Binds to RNA in loop regions with AU-rich sequences. The chain is Probable ribonuclease FAU-1 from Pyrobaculum islandicum (strain DSM 4184 / JCM 9189 / GEO3).